The primary structure comprises 224 residues: Endonuclease NucS (224 aa).

Belongs to the NucS endonuclease family.

It localises to the cytoplasm. Cleaves both 3' and 5' ssDNA extremities of branched DNA structures. The chain is Endonuclease NucS from Rhodococcus jostii (strain RHA1).